Reading from the N-terminus, the 586-residue chain is ATP-dependent lipid A-core flippase (586 aa).

4 consecutive transmembrane segments (helical) span residues 25–45 (AYFI…AQLI), 74–94 (LWFV…GAYF), 163–183 (VAWF…AFIC), and 264–284 (VLHI…MILW). An ABC transmembrane type-1 domain is found at 28–317 (IISFIGFGVF…LTKINSIIQK (290 aa)). In terms of domain architecture, ABC transporter spans 349 to 583 (VELKDVHFGY…SGVYANLYHS (235 aa)). Residue 382 to 389 (GSSGSGKS) participates in ATP binding.

This sequence belongs to the ABC transporter superfamily. Lipid exporter (TC 3.A.1.106) family. As to quaternary structure, homodimer.

The protein resides in the cell inner membrane. It carries out the reaction ATP + H2O + lipid A-core oligosaccharideSide 1 = ADP + phosphate + lipid A-core oligosaccharideSide 2.. In terms of biological role, involved in lipopolysaccharide (LPS) biosynthesis. Translocates lipid A-core from the inner to the outer leaflet of the inner membrane. Transmembrane domains (TMD) form a pore in the inner membrane and the ATP-binding domain (NBD) is responsible for energy generation. The polypeptide is ATP-dependent lipid A-core flippase (Saccharophagus degradans (strain 2-40 / ATCC 43961 / DSM 17024)).